The following is a 35-amino-acid chain: MQVNNLGFIASILFVLVPTVFLLILFIQTRQETEG.

Residues 7–27 (GFIASILFVLVPTVFLLILFI) form a helical membrane-spanning segment.

The protein belongs to the PsbM family. In terms of assembly, PSII is composed of 1 copy each of membrane proteins PsbA, PsbB, PsbC, PsbD, PsbE, PsbF, PsbH, PsbI, PsbJ, PsbK, PsbL, PsbM, PsbT, PsbX, PsbY, PsbZ, Psb30/Ycf12, peripheral proteins PsbO, CyanoQ (PsbQ), PsbU, PsbV and a large number of cofactors. It forms dimeric complexes.

It localises to the cellular thylakoid membrane. Functionally, one of the components of the core complex of photosystem II (PSII). PSII is a light-driven water:plastoquinone oxidoreductase that uses light energy to abstract electrons from H(2)O, generating O(2) and a proton gradient subsequently used for ATP formation. It consists of a core antenna complex that captures photons, and an electron transfer chain that converts photonic excitation into a charge separation. This subunit is found at the monomer-monomer interface. The protein is Photosystem II reaction center protein M of Microcystis aeruginosa (strain NIES-843 / IAM M-2473).